The following is a 373-amino-acid chain: tRNA-specific 2-thiouridylase MnmA (373 aa).

Residues Gly12 to Ser19 and Met38 contribute to the ATP site. Residues Asn98 to Asp100 form an interaction with target base in tRNA region. The active-site Nucleophile is Cys103. Cys103 and Cys200 are joined by a disulfide. An ATP-binding site is contributed by Gly127. The interval Lys150–Gln152 is interaction with tRNA. Cys200 serves as the catalytic Cysteine persulfide intermediate. Residues Arg312 to Tyr313 form an interaction with tRNA region.

The protein belongs to the MnmA/TRMU family.

Its subcellular location is the cytoplasm. It carries out the reaction S-sulfanyl-L-cysteinyl-[protein] + uridine(34) in tRNA + AH2 + ATP = 2-thiouridine(34) in tRNA + L-cysteinyl-[protein] + A + AMP + diphosphate + H(+). Functionally, catalyzes the 2-thiolation of uridine at the wobble position (U34) of tRNA, leading to the formation of s(2)U34. In Streptococcus pneumoniae (strain Hungary19A-6), this protein is tRNA-specific 2-thiouridylase MnmA.